Reading from the N-terminus, the 231-residue chain is 5'-methylthioadenosine/S-adenosylhomocysteine nucleosidase (231 aa).

Glu12 functions as the Proton acceptor in the catalytic mechanism. Residues Gly78, Met153, and 174 to 175 (ME) each bind substrate. The active-site Proton donor is Asp198.

The protein belongs to the PNP/UDP phosphorylase family. MtnN subfamily.

The enzyme catalyses S-adenosyl-L-homocysteine + H2O = S-(5-deoxy-D-ribos-5-yl)-L-homocysteine + adenine. It catalyses the reaction S-methyl-5'-thioadenosine + H2O = 5-(methylsulfanyl)-D-ribose + adenine. The catalysed reaction is 5'-deoxyadenosine + H2O = 5-deoxy-D-ribose + adenine. It participates in amino-acid biosynthesis; L-methionine biosynthesis via salvage pathway; S-methyl-5-thio-alpha-D-ribose 1-phosphate from S-methyl-5'-thioadenosine (hydrolase route): step 1/2. In terms of biological role, catalyzes the irreversible cleavage of the glycosidic bond in both 5'-methylthioadenosine (MTA) and S-adenosylhomocysteine (SAH/AdoHcy) to adenine and the corresponding thioribose, 5'-methylthioribose and S-ribosylhomocysteine, respectively. Also cleaves 5'-deoxyadenosine, a toxic by-product of radical S-adenosylmethionine (SAM) enzymes, into 5-deoxyribose and adenine. The protein is 5'-methylthioadenosine/S-adenosylhomocysteine nucleosidase of Bacillus anthracis (strain A0248).